Here is a 687-residue protein sequence, read N- to C-terminus: Follicle-stimulating hormone receptor (687 aa).

The signal sequence occupies residues 1–17 (MALLLVSLLAFLSLGSG). An LRRNT domain is found at 18 to 46 (CHHQVCHYSNRVFLCQESKVTEIPSDLPR). At 18 to 358 (CHHQVCHYSN…EDIMGYDILR (341 aa)) the chain is on the extracellular side. Residues Cys23 and Cys32 are joined by a disulfide bond. LRR repeat units lie at residues 49 to 72 (LELR…FGDL), 73 to 97 (KKIE…LPKL), 98 to 118 (HEIR…AFQN), 119 to 143 (LPNL…KIQS), 144 to 169 (LQKV…MGLS), 170 to 192 (FESM…AFNG), 193 to 216 (TQLD…VFQG), 217 to 240 (ASGP…GLEN), and 241 to 259 (LKKL…PSLE). Residues Asn191 and Asn199 are each glycosylated (N-linked (GlcNAc...) asparagine). 4 disulfides stabilise this stretch: Cys275/Cys338, Cys276/Cys292, Cys276/Cys348, and Cys292/Cys330. N-linked (GlcNAc...) asparagine glycosylation is present at Asn293. Tyr327 bears the Sulfotyrosine mark. The helical transmembrane segment at 359–379 (VLIWFISILAITGNIIVLVIL) threads the bilayer. The Cytoplasmic segment spans residues 380 to 390 (ITSQYKLTVPR). The helical transmembrane segment at 391 to 413 (FLMCNLAFADLCIGIYLLLIASV) threads the bilayer. The Extracellular segment spans residues 414 to 435 (DIHTKSQYHNYAIDWQTGAGCD). Cys434 and Cys509 are disulfide-bonded. A helical membrane pass occupies residues 436–457 (AAGFFTVFGSELSVYTLTAITL). The Cytoplasmic portion of the chain corresponds to 458-477 (ERWHTITHAMQLECKVQLRH). The chain crosses the membrane as a helical span at residues 478–500 (AASVMLVGWIFGFGVGLLPIFGI). Topologically, residues 501–520 (STYMKVSICLPMDIDSPLSQ) are extracellular. A helical transmembrane segment spans residues 521–542 (LYVMSLLVLNVLAFVVICGCYT). Over 543–565 (HIYLTVRNPNIVSSSSDTKIAKR) the chain is Cytoplasmic. A helical transmembrane segment spans residues 566–589 (MGILIFTDFLCMAPISFFGISASL). Residues 590–600 (KVALITVSKSK) lie on the Extracellular side of the membrane. The chain crosses the membrane as a helical span at residues 601–622 (ILLVLFYPINSCANPFLYAIFT). Residues 623-687 (KNFRRDFFIL…LVPLSHLAQN (65 aa)) are Cytoplasmic-facing.

Belongs to the G-protein coupled receptor 1 family. FSH/LSH/TSH subfamily. Homotrimer. Functions as a homotrimer binding the FSH hormone heterodimer composed of CGA and FSHB. Interacts with ARRB2. Interacts with APPL2; interaction is independent of follicle stimulating hormone stimulation. Post-translationally, N-glycosylated; indirectly required for FSH-binding, possibly via a conformational change that allows high affinity binding of hormone. In terms of processing, sulfated.

It localises to the cell membrane. In terms of biological role, g protein-coupled receptor for follitropin, the follicle-stimulating hormone. Through cAMP production activates the downstream PI3K-AKT and ERK1/ERK2 signaling pathways. The sequence is that of Follicle-stimulating hormone receptor (FSHR) from Equus asinus (Donkey).